The following is a 497-amino-acid chain: NADH-quinone oxidoreductase subunit N (497 aa).

A run of 14 helical transmembrane segments spans residues 14–34 (LMAM…MLSI), 45–65 (SLTV…WGLF), 86–106 (IFYS…AYPW), 116–136 (EFYL…SAQH), 137–157 (LAAV…LLGY), 171–191 (YFVL…MLYA), 215–235 (ILAG…LVPF), 253–273 (FLGT…FLYV), 281–301 (LNTA…LMAL), 309–329 (LLGY…IALH), 338–358 (VAVY…VVSL), 385–405 (AAVM…LGFI), 420–439 (WVLT…YYLR), and 461–481 (AFTA…VFGI).

This sequence belongs to the complex I subunit 2 family. NDH-1 is composed of 13 different subunits. Subunits NuoA, H, J, K, L, M, N constitute the membrane sector of the complex.

It is found in the cell membrane. It catalyses the reaction a quinone + NADH + 5 H(+)(in) = a quinol + NAD(+) + 4 H(+)(out). NDH-1 shuttles electrons from NADH, via FMN and iron-sulfur (Fe-S) centers, to quinones in the respiratory chain. The immediate electron acceptor for the enzyme in this species is believed to be ubiquinone. Couples the redox reaction to proton translocation (for every two electrons transferred, four hydrogen ions are translocated across the cytoplasmic membrane), and thus conserves the redox energy in a proton gradient. The chain is NADH-quinone oxidoreductase subunit N from Hamiltonella defensa subsp. Acyrthosiphon pisum (strain 5AT).